Here is a 1002-residue protein sequence, read N- to C-terminus: Copper-transporting ATPase HMA5 (1002 aa).

A compositionally biased stretch (low complexity) spans 32–48; the sequence is RPRYPSMPRRPRSAAVA. The disordered stretch occupies residues 32-63; sequence RPRYPSMPRRPRSAAVAGEGGEGGGGGGDGDL. Residues 49-60 are compositionally biased toward gly residues; that stretch reads GEGGEGGGGGGD. HMA domains lie at 75 to 141, 153 to 219, and 228 to 294; these read KVAV…FEAK, LVCR…FEAI, and SRID…SGDL. Cu(+) is bound by residues Cys86, Cys89, Cys164, and Cys167. 8 helical membrane passes run 320-340, 354-374, 392-412, 425-445, 585-605, 624-644, 943-963, and 972-992; these read FLWS…FMYI, MMSI…FVIG, MDVL…YSIL, FFET…LEIL, VFVP…FLAG, LALQ…LGLA, YVWA…VLFP, and WVAG…SLLL.

Belongs to the cation transport ATPase (P-type) (TC 3.A.3) family. Type IB subfamily. In terms of tissue distribution, expressed in root pericycle cells, xylem region of diffuse vascular bundles in the first node, and vascular tissues of peduncle, rachis and husk.

It is found in the cell membrane. The catalysed reaction is Cu(+)(in) + ATP + H2O = Cu(+)(out) + ADP + phosphate + H(+). Functionally, copper (Cu) transporter that plays an essential role in promoting translocation of Cu from roots to shoots. Involved in loading Cu to the xylem of the roots and other organs, including panicles. This Oryza sativa subsp. japonica (Rice) protein is Copper-transporting ATPase HMA5.